We begin with the raw amino-acid sequence, 244 residues long: Chalcone--flavanone isomerase (244 aa).

Thr45, Asn110, and Ser187 together coordinate substrate.

It belongs to the chalcone isomerase family.

The catalysed reaction is a chalcone = a flavanone.. The protein operates within secondary metabolite biosynthesis; flavonoid biosynthesis. Catalyzes the intramolecular cyclization of bicyclic chalcones into tricyclic (S)-flavanones. Responsible for the isomerization of 4,2',4',6'-tetrahydroxychalcone (also termed chalcone) into naringenin. The sequence is that of Chalcone--flavanone isomerase (CHI) from Nicotiana tabacum (Common tobacco).